The chain runs to 168 residues: Peptidoglycan-associated lipoprotein (168 aa).

The N-terminal stretch at 1–21 (MEMLKFGKFAALALAMAVAVG) is a signal peptide. Residue Cys22 is the site of N-palmitoyl cysteine attachment. Residue Cys22 is the site of S-diacylglycerol cysteine attachment. The region spanning 56–168 (SDEAALRAIT…AQNRRVELKK (113 aa)) is the OmpA-like domain. Residues 147–168 (RPVATGHDEQSWAQNRRVELKK) are disordered.

It belongs to the Pal lipoprotein family. The Tol-Pal system is composed of five core proteins: the inner membrane proteins TolA, TolQ and TolR, the periplasmic protein TolB and the outer membrane protein Pal. They form a network linking the inner and outer membranes and the peptidoglycan layer.

It is found in the cell outer membrane. In terms of biological role, part of the Tol-Pal system, which plays a role in outer membrane invagination during cell division and is important for maintaining outer membrane integrity. The polypeptide is Peptidoglycan-associated lipoprotein (Pseudomonas aeruginosa (strain ATCC 15692 / DSM 22644 / CIP 104116 / JCM 14847 / LMG 12228 / 1C / PRS 101 / PAO1)).